A 545-amino-acid polypeptide reads, in one-letter code: Heparanase (545 aa).

A signal peptide spans 1-37 (MLACRKPGLRPPLLLLLPLLGPLGPCSPGTPAAAAPA). 64–66 (DAN) contacts heparan sulfate group. Positions 112-159 (PAFEERSYWLSQSNQDICKSGSIPSDVEEKLRLEWPFQEQVLLREQYQ) are cleaved as a propeptide — linker peptide. A disulfide bridge links Cys129 with Cys181. 160–164 (KKFTN) serves as a coordination point for heparan sulfate group. Asn164 and Asn219 each carry an N-linked (GlcNAc...) asparagine glycan. The Proton donor role is filled by Glu227. Heparan sulfate group is bound by residues 272 to 282 (QPRRNTVKMLK), His298, and Arg305. Positions 290–419 (EVIDSVTWHH…LLFKKLVGNK (130 aa)) are required for heterodimerization with the heparanase 8 kDa subunit. The active-site Nucleophile is Glu345. Heparan sulfate group-binding positions include 350-352 (FGG) and 391-393 (GNY). A disulfide bridge connects residues Cys439 and Cys544. Residue Asn461 is glycosylated (N-linked (GlcNAc...) asparagine). The interval 529-545 (FSYGFFVIRNAKVAACI) is required for transferring proheparanase to the Golgi apparatus, secretion and subsequent enzyme activity and for enhancement of PKB/AKT1 phosphorylation.

It belongs to the glycosyl hydrolase 79 family. Heterodimer; heterodimer formation between the 8 kDa and the 50 kDa subunits is required for enzyme activity. Interacts with TF; the interaction, inhibited by heparin, enhances the generation of activated factor X and activates coagulation. Interacts with HRG; the interaction is enhanced at acidic pH, partially inhibits binding of HPSE to cell surface receptors and modulates its enzymatic activity. Interacts with SDC1; the interaction enhances the shedding of SDC1. Interacts with HPSE2. In terms of processing, proteolytically processed. The cleavage of the 65 kDa form leads to the generation of a linker peptide, and the 8 kDa and the 50 kDa products. The active form, the 8/50 kDa heterodimer, is resistant to degradation. Complete removal of the linker peptide appears to be a prerequisite to the complete activation of the enzyme. Post-translationally, N-glycosylated. Glycosylation of the 50 kDa subunit appears to be essential for its solubility. Highly expressed in placenta and weakly in the kidney, lung, spleen and uterus.

It localises to the lysosome membrane. Its subcellular location is the secreted. It is found in the nucleus. It carries out the reaction endohydrolysis of (1-&gt;4)-beta-D-glycosidic bonds of heparan sulfate chains in heparan sulfate proteoglycan.. Inhibited by laminarin sulfate and, to a lower extent, by heparin, sulfamin and EDTA. Activated by calcium and magnesium. In terms of biological role, endoglycosidase that cleaves heparan sulfate proteoglycans (HSPGs) into heparan sulfate side chains and core proteoglycans. Participates in extracellular matrix (ECM) degradation and remodeling. Selectively cleaves the linkage between a glucuronic acid unit and an N-sulfo glucosamine unit carrying either a 3-O-sulfo or a 6-O-sulfo group. Can also cleave the linkage between a glucuronic acid unit and an N-sulfo glucosamine unit carrying a 2-O-sulfo group, but not linkages between a glucuronic acid unit and a 2-O-sulfated iduronic acid moiety. Essentially inactive at neutral pH but becomes active under acidic conditions such as during tumor invasion and in inflammatory processes. Facilitates cell migration associated with metastasis, wound healing and inflammation. Enhances shedding of syndecans. Acts as a procoagulant by enhancing the generation of activated factor X/F10 in the presence of tissue factor/TF and activated factor VII/F7. Independent of its enzymatic activity, increases cell adhesion to the extracellular matrix (ECM). Enhances AKT1/PKB phosphorylation, possibly via interaction with a lipid raft-resident receptor. Plays a role in the regulation of osteogenesis. Enhances angiogenesis through up-regulation of SRC-mediated activation of VEGF. Implicated in hair follicle inner root sheath differentiation and hair homeostasis. The chain is Heparanase (HPSE) from Bos taurus (Bovine).